The following is a 334-amino-acid chain: Ornithine carbamoyltransferase (334 aa).

Carbamoyl phosphate contacts are provided by residues 56-59 (STRT), Gln-83, Arg-107, and 134-137 (HPTQ). L-ornithine contacts are provided by residues Asn-168, Asp-232, and 236 to 237 (SM). Carbamoyl phosphate is bound by residues 274 to 275 (CL) and Arg-320.

The protein belongs to the aspartate/ornithine carbamoyltransferase superfamily. OTCase family. Homotrimer.

The protein resides in the cytoplasm. The catalysed reaction is carbamoyl phosphate + L-ornithine = L-citrulline + phosphate + H(+). The protein operates within amino-acid biosynthesis; L-arginine biosynthesis; L-arginine from L-ornithine and carbamoyl phosphate: step 1/3. Functionally, reversibly catalyzes the transfer of the carbamoyl group from carbamoyl phosphate (CP) to the N(epsilon) atom of ornithine (ORN) to produce L-citrulline. This Salmonella typhimurium (strain LT2 / SGSC1412 / ATCC 700720) protein is Ornithine carbamoyltransferase (argI).